The chain runs to 324 residues: Mating-type protein A-3 (324 aa).

Positions 147–215 (TSRPRNQFVL…RHRAENPHLY (69 aa)) form a DNA-binding region, HMG box.

The protein localises to the nucleus. In terms of biological role, required, together with mating-type protein A-2, for efficient ascospore formation. The sequence is that of Mating-type protein A-3 (mtA-3) from Neurospora crassa (strain ATCC 24698 / 74-OR23-1A / CBS 708.71 / DSM 1257 / FGSC 987).